We begin with the raw amino-acid sequence, 357 residues long: 3-isopropylmalate dehydrogenase (357 aa).

Residue 76–89 (GPQWDTIDPALRPE) participates in NAD(+) binding. Positions 96, 106, 134, and 224 each coordinate substrate. Mg(2+) contacts are provided by D224, D248, and D252. An NAD(+)-binding site is contributed by 282–294 (GSAPDIAGQGVAN).

The protein belongs to the isocitrate and isopropylmalate dehydrogenases family. LeuB type 1 subfamily. In terms of assembly, homodimer. The cofactor is Mg(2+). Mn(2+) is required as a cofactor.

Its subcellular location is the cytoplasm. It carries out the reaction (2R,3S)-3-isopropylmalate + NAD(+) = 4-methyl-2-oxopentanoate + CO2 + NADH. It participates in amino-acid biosynthesis; L-leucine biosynthesis; L-leucine from 3-methyl-2-oxobutanoate: step 3/4. In terms of biological role, catalyzes the oxidation of 3-carboxy-2-hydroxy-4-methylpentanoate (3-isopropylmalate) to 3-carboxy-4-methyl-2-oxopentanoate. The product decarboxylates to 4-methyl-2 oxopentanoate. This Xylella fastidiosa (strain Temecula1 / ATCC 700964) protein is 3-isopropylmalate dehydrogenase.